Here is a 67-residue protein sequence, read N- to C-terminus: Large ribosomal subunit protein bL35 (67 aa).

Belongs to the bacterial ribosomal protein bL35 family.

The protein is Large ribosomal subunit protein bL35 of Rickettsia prowazekii (strain Madrid E).